A 231-amino-acid chain; its full sequence is U1 small nuclear ribonucleoprotein C (231 aa).

The segment at 4-36 (YYCEYCHSYLTHDTLSVRKSHLVGKNHLRITAD) adopts a Matrin-type zinc-finger fold. The segment covering 49–61 (HNHKRRHIGKRGR) has biased composition (basic residues). Disordered regions lie at residues 49–71 (HNHK…SQNE), 137–177 (PQRA…LEPP), and 205–231 (ESKK…RYGN).

Belongs to the U1 small nuclear ribonucleoprotein C family. U1 snRNP is composed of the 7 core Sm proteins SMB1, SMD1, SMD2, SMD3, SME1, SMX3 and SMX2 (Sm proteins B, D1, D2, D3, E, F and G, respectively) that assemble in a heptameric protein ring on the Sm site of the small nuclear RNA to form the core snRNP, and at least 10 U1 snRNP-specific proteins SNP1/U1-70K, MUD1/U1-A, YHC1/U1-C, LUC7, NAM8, PRP39, PRP40, PRP42, SNU56 and SNU71. YHC1/U1-C interacts with U1 snRNA and the 5' splice-site region of the pre-mRNA.

It is found in the nucleus. Its function is as follows. Component of the spliceosomal U1 snRNP, which is essential for recognition of the pre-mRNA 5' splice-site and the subsequent assembly of the spliceosome. YHC1/U1-C is directly involved in initial 5' splice-site recognition for both constitutive and regulated alternative splicing. The interaction with the 5' splice-site seems to precede base-pairing between the pre-mRNA and the U1 snRNA. Stimulates commitment or early (E) complex formation by stabilizing the base pairing of the 5' end of the U1 snRNA and the 5' splice-site region. This Saccharomyces cerevisiae (strain ATCC 204508 / S288c) (Baker's yeast) protein is U1 small nuclear ribonucleoprotein C.